Consider the following 205-residue polypeptide: GTP-binding protein rho3 (205 aa).

Residue 20–27 (GDGAAGKT) coordinates GTP. Residues 42-50 (YEPTIFENY) carry the Effector region motif. GTP-binding positions include 67–71 (DTAGQ) and 125–128 (LKCD). C202 carries the post-translational modification Cysteine methyl ester. C202 is lipidated: S-geranylgeranyl cysteine. The propeptide at 203-205 (IIA) is removed in mature form.

The protein belongs to the small GTPase superfamily. Rho family. Interacts with for3. Post-translationally, palmitoylated by the erf2-erf4 complex.

The protein localises to the cell membrane. Functionally, involved in controlling cell shape and septation. Regulates cell separation by modulating the function of the exocyst complex. Involved in post-Golgi vesicle transport. Involved in driving sexual development in a palmitoylation-dependent manner. The sequence is that of GTP-binding protein rho3 (rho3) from Schizosaccharomyces pombe (strain 972 / ATCC 24843) (Fission yeast).